A 335-amino-acid chain; its full sequence is Phosphate acyltransferase (335 aa).

Belongs to the PlsX family. As to quaternary structure, homodimer. Probably interacts with PlsY.

It is found in the cytoplasm. The catalysed reaction is a fatty acyl-[ACP] + phosphate = an acyl phosphate + holo-[ACP]. The protein operates within lipid metabolism; phospholipid metabolism. Catalyzes the reversible formation of acyl-phosphate (acyl-PO(4)) from acyl-[acyl-carrier-protein] (acyl-ACP). This enzyme utilizes acyl-ACP as fatty acyl donor, but not acyl-CoA. In Desulfitobacterium hafniense (strain Y51), this protein is Phosphate acyltransferase.